Here is a 365-residue protein sequence, read N- to C-terminus: Tetratricopeptide repeat protein 19, mitochondrial (365 aa).

A mitochondrion-targeting transit peptide spans 1–52 (MFRLLRWRLGRTLLRAAGRRCGGCTARLLPERTGDAGTGAERLRTRGAPARG). TPR repeat units lie at residues 127–160 (TYTY…LLGG), 220–260 (ANTY…CQEI), 269–302 (IVLM…AREI), and 308–341 (HMVL…AELK).

The protein belongs to the TTC19 family. As to quaternary structure, binds to the mature mitochondrial complex III dimer, after the incorporation of the Rieske protein UQCRFS1. Interacts with UQCRC1 and UQCRFS1. Interacts with ZFYVE26 and CHMP4B. Post-translationally, proteolytically cleaved by PARL.

It localises to the mitochondrion inner membrane. Its function is as follows. Required for the preservation of the structural and functional integrity of mitochondrial respiratory complex III by allowing the physiological turnover of the Rieske protein UQCRFS1. Involved in the clearance of UQCRFS1 N-terminal fragments, which are produced upon incorporation into the complex III and whose presence is detrimental for its catalytic activity. The sequence is that of Tetratricopeptide repeat protein 19, mitochondrial (Ttc19) from Mus musculus (Mouse).